Reading from the N-terminus, the 938-residue chain is Isoleucine--tRNA ligase (938 aa).

Positions 58-68 match the 'HIGH' region motif; it reads PYANGNIHIGH. E561 lines the L-isoleucyl-5'-AMP pocket. Residues 602–606 carry the 'KMSKS' region motif; sequence KMSKS. K605 contacts ATP. 4 residues coordinate Zn(2+): C901, C904, C921, and C924.

This sequence belongs to the class-I aminoacyl-tRNA synthetase family. IleS type 1 subfamily. Monomer. Zn(2+) is required as a cofactor.

The protein resides in the cytoplasm. The catalysed reaction is tRNA(Ile) + L-isoleucine + ATP = L-isoleucyl-tRNA(Ile) + AMP + diphosphate. Catalyzes the attachment of isoleucine to tRNA(Ile). As IleRS can inadvertently accommodate and process structurally similar amino acids such as valine, to avoid such errors it has two additional distinct tRNA(Ile)-dependent editing activities. One activity is designated as 'pretransfer' editing and involves the hydrolysis of activated Val-AMP. The other activity is designated 'posttransfer' editing and involves deacylation of mischarged Val-tRNA(Ile). The sequence is that of Isoleucine--tRNA ligase from Yersinia pseudotuberculosis serotype O:1b (strain IP 31758).